Here is a 173-residue protein sequence, read N- to C-terminus: Disulfide bond formation protein B (173 aa).

The Cytoplasmic segment spans residues 1 to 14; the sequence is MIEFLRRIAAHRLA. A helical membrane pass occupies residues 15–31; the sequence is WGLLAASALFLELSALF. Topologically, residues 32 to 49 are periplasmic; it reads FQYVLGLHPCVMCVYERL. A disulfide bridge connects residues Cys-41 and Cys-44. Residues 50–65 form a helical membrane-spanning segment; the sequence is AILGVLSAGLLGMVAP. At 66–72 the chain is on the cytoplasmic side; sequence EKWYLRW. Residues 73 to 90 traverse the membrane as a helical segment; the sequence is SALLLWGYSAFRGLQLAL. Residues 91–145 lie on the Periplasmic side of the membrane; that stretch reads KHVDYQMNPSPFNVCSPFADFPSWAPLDQWLPWLFFPDGDCSEISWQFLSFSMPQ. Cysteines 105 and 131 form a disulfide. A helical membrane pass occupies residues 146 to 164; the sequence is WLVAIFAAYLLVFVVVTIG. Residues 165–173 are Cytoplasmic-facing; that stretch reads NLVKGRCCS.

It belongs to the DsbB family.

The protein localises to the cell inner membrane. Required for disulfide bond formation in some periplasmic proteins. Acts by oxidizing the DsbA protein. This chain is Disulfide bond formation protein B, found in Aeromonas salmonicida (strain A449).